Here is a 187-residue protein sequence, read N- to C-terminus: UPF0301 protein BCI_0481 (187 aa).

It belongs to the UPF0301 (AlgH) family.

The protein is UPF0301 protein BCI_0481 of Baumannia cicadellinicola subsp. Homalodisca coagulata.